We begin with the raw amino-acid sequence, 155 residues long: Nodulin-related protein 2 (155 aa).

An N-acetylmethionine modification is found at M1. 2 disordered regions span residues 1 to 37 and 85 to 155; these read MNFISDQVKKLSSSTPEEPDHNKPVEGTETATRPATN and DEKS…GFLK. A compositionally biased stretch (basic and acidic residues) spans 95–106; the sequence is DKAEKYLNDYES. The span at 120-130 shows a compositional bias: low complexity; the sequence is SQAEPASQPEP.

As to quaternary structure, interacts with DEK3.

Functionally, may be a negative regulator of the ABA signaling/synthesis pathway. This Arabidopsis thaliana (Mouse-ear cress) protein is Nodulin-related protein 2.